Consider the following 318-residue polypeptide: UAP56-interacting factor (318 aa).

An N-acetylmethionine modification is found at Met1. Residues 1 to 25 (MNRFGTRLVGATATSSPPPKARSNE) are disordered. Thr14 bears the Phosphothreonine mark. Residues Ser16 and Ser23 each carry the phosphoserine modification. The short motif at 26–44 (NLDKIDMSLDDIIKLNRKE) is the UAP56-binding motif element. At Ser61 the chain carries Phosphoserine. The interval 79–100 (GFGKTSLNRRGRVMPGKRRPNG) is disordered. The span at 85–98 (LNRRGRVMPGKRRP) shows a compositional bias: basic residues. Position 118 is a phosphoserine (Ser118). A Glycyl lysine isopeptide (Lys-Gly) (interchain with G-Cter in SUMO1) cross-link involves residue Lys140. Lys261 is covalently cross-linked (Glycyl lysine isopeptide (Lys-Gly) (interchain with G-Cter in SUMO2)).

This sequence belongs to the UIF family. As to quaternary structure, interacts with CHTOP. Interacts with DDX39B/UAP56 and NXF1; interaction with DDX39B/UAP56 and NXF1 are mutually exclusive. Interacts with SSRP1; required for its recruitment to mRNAs. Expressed in a wide variety of cancer types.

The protein resides in the nucleus. Its subcellular location is the nucleoplasm. The protein localises to the nucleus speckle. Its function is as follows. Required for mRNA export from the nucleus to the cytoplasm. Acts as an adapter that uses the DDX39B/UAP56-NFX1 pathway to ensure efficient mRNA export and delivering to the nuclear pore. Associates with spliced and unspliced mRNAs simultaneously with ALYREF/THOC4. This is UAP56-interacting factor (FYTTD1) from Homo sapiens (Human).